The sequence spans 399 residues: MAKLTVKDVELKGKKVLVRVDFNVPLKDGVITNDNRITAALPTIKYILEQGGRAILFSHLGRVKEEADKEGKSLAPVAADLAAKLGQDVAFIAGATRGAELEAAINALEDGQVLLVENTRFEDVDGKKESKNDEELGKYWASLGDGIFVNDAFGTAHRSHASNVGISANVEKAVAGFLLENEIAYIQEAVETPERPFVAILGGSKVSDKIGVIENLLEKADKVLIGGGMTYTFYKAQGIEIGNSLVEEDKLDVAKTLLEKANGKLILPVDSKEANAFAGYTEVRDTDGEAVSEGFLGLDIGPKSIAKFDEALTGAKTVVWNGPMGVFENPDFQAGTIGVMDAIVKQPGVKSIIGGGDSAAAAINLGRADKFSWISTGGGASMELLEGKVLPGLAALTEK.

Residues 21–23 (DFN), Arg-36, 59–62 (HLGR), Arg-120, and Arg-158 each bind substrate. ATP is bound by residues Lys-209, Gly-297, Glu-328, and 355-358 (GGDS).

The protein belongs to the phosphoglycerate kinase family. In terms of assembly, monomer.

It localises to the cytoplasm. It catalyses the reaction (2R)-3-phosphoglycerate + ATP = (2R)-3-phospho-glyceroyl phosphate + ADP. Its pathway is carbohydrate degradation; glycolysis; pyruvate from D-glyceraldehyde 3-phosphate: step 2/5. In Streptococcus suis (strain 05ZYH33), this protein is Phosphoglycerate kinase.